We begin with the raw amino-acid sequence, 105 residues long: Met repressor (105 aa).

The protein belongs to the MetJ family. As to quaternary structure, homodimer.

Its subcellular location is the cytoplasm. Its function is as follows. This regulatory protein, when combined with SAM (S-adenosylmethionine) represses the expression of the methionine regulon and of enzymes involved in SAM synthesis. In Sodalis glossinidius (strain morsitans), this protein is Met repressor.